The primary structure comprises 255 residues: CDP-diacylglycerol pyrophosphatase (255 aa).

A helical membrane pass occupies residues 5–27 (LLITVALIAVLALTTLVAWRYLF).

It belongs to the Cdh family.

The protein resides in the cell inner membrane. It carries out the reaction a CDP-1,2-diacyl-sn-glycerol + H2O = a 1,2-diacyl-sn-glycero-3-phosphate + CMP + 2 H(+). The protein operates within phospholipid metabolism; CDP-diacylglycerol degradation; phosphatidate from CDP-diacylglycerol: step 1/1. This Cronobacter sakazakii (strain ATCC BAA-894) (Enterobacter sakazakii) protein is CDP-diacylglycerol pyrophosphatase.